The following is a 779-amino-acid chain: Translation initiation factor IF-2 (779 aa).

A disordered region spans residues 44–193 (RQLDNAVDGT…TPPKPKELPE (150 aa)). Basic and acidic residues predominate over residues 53 to 65 (TNKKAEAPKKETT). Polar residues predominate over residues 66–81 (SNENGNSKGPNKPNMT). Composition is skewed to low complexity over residues 82–93 (NSNEKSNKPNKP) and 117–167 (ANTS…NNKG). The region spanning 280 to 449 (ERPPVVTIMG…LLVSEVEELK (170 aa)) is the tr-type G domain. A G1 region spans residues 289–296 (GHVDHGKT). 289-296 (GHVDHGKT) lines the GTP pocket. The segment at 314–318 (GITQH) is G2. Residues 335–338 (DTPG) are G3. Residues 335 to 339 (DTPGH) and 389 to 392 (NKID) each bind GTP. Positions 389 to 392 (NKID) are G4. Residues 425 to 427 (SAK) form a G5 region.

The protein belongs to the TRAFAC class translation factor GTPase superfamily. Classic translation factor GTPase family. IF-2 subfamily.

The protein localises to the cytoplasm. Functionally, one of the essential components for the initiation of protein synthesis. Protects formylmethionyl-tRNA from spontaneous hydrolysis and promotes its binding to the 30S ribosomal subunits. Also involved in the hydrolysis of GTP during the formation of the 70S ribosomal complex. The polypeptide is Translation initiation factor IF-2 (Listeria monocytogenes serovar 1/2a (strain ATCC BAA-679 / EGD-e)).